The primary structure comprises 325 residues: GMP reductase (325 aa).

Cysteine 173 serves as the catalytic Thioimidate intermediate. An NADP(+)-binding site is contributed by 202 to 225 (IIADGGIRSHGDIAKSVRFGATMV).

The protein belongs to the IMPDH/GMPR family. GuaC type 2 subfamily.

It catalyses the reaction IMP + NH4(+) + NADP(+) = GMP + NADPH + 2 H(+). Catalyzes the irreversible NADPH-dependent deamination of GMP to IMP. It functions in the conversion of nucleobase, nucleoside and nucleotide derivatives of G to A nucleotides, and in maintaining the intracellular balance of A and G nucleotides. The sequence is that of GMP reductase from Acidovorax sp. (strain JS42).